The sequence spans 128 residues: Sulfurtransferase TusD (128 aa).

Cys78 functions as the Cysteine persulfide intermediate in the catalytic mechanism.

Belongs to the DsrE/TusD family. As to quaternary structure, heterohexamer, formed by a dimer of trimers. The hexameric TusBCD complex contains 2 copies each of TusB, TusC and TusD. The TusBCD complex interacts with TusE.

It is found in the cytoplasm. Functionally, part of a sulfur-relay system required for 2-thiolation of 5-methylaminomethyl-2-thiouridine (mnm(5)s(2)U) at tRNA wobble positions. Accepts sulfur from TusA and transfers it in turn to TusE. The protein is Sulfurtransferase TusD of Escherichia coli O127:H6 (strain E2348/69 / EPEC).